Consider the following 194-residue polypeptide: Dephospho-CoA kinase (194 aa).

The region spanning 3-194 (IVGLTGSIGM…RAIVDDLRAG (192 aa)) is the DPCK domain. 11 to 16 (GMGKST) lines the ATP pocket.

Belongs to the CoaE family.

The protein resides in the cytoplasm. It carries out the reaction 3'-dephospho-CoA + ATP = ADP + CoA + H(+). Its pathway is cofactor biosynthesis; coenzyme A biosynthesis; CoA from (R)-pantothenate: step 5/5. Its function is as follows. Catalyzes the phosphorylation of the 3'-hydroxyl group of dephosphocoenzyme A to form coenzyme A. This chain is Dephospho-CoA kinase, found in Rhizobium meliloti (strain 1021) (Ensifer meliloti).